Reading from the N-terminus, the 458-residue chain is Serine--tRNA ligase (458 aa).

L-serine is bound at residue 252–254; that stretch reads TAE. Residues 283–285 and V299 each bind ATP; that span reads RKE. L-serine is bound at residue E306. 370–373 is a binding site for ATP; the sequence is EMVS. T405 contacts L-serine.

Belongs to the class-II aminoacyl-tRNA synthetase family. Type-1 seryl-tRNA synthetase subfamily. In terms of assembly, homodimer. The tRNA molecule binds across the dimer.

It is found in the cytoplasm. The enzyme catalyses tRNA(Ser) + L-serine + ATP = L-seryl-tRNA(Ser) + AMP + diphosphate + H(+). The catalysed reaction is tRNA(Sec) + L-serine + ATP = L-seryl-tRNA(Sec) + AMP + diphosphate + H(+). It functions in the pathway aminoacyl-tRNA biosynthesis; selenocysteinyl-tRNA(Sec) biosynthesis; L-seryl-tRNA(Sec) from L-serine and tRNA(Sec): step 1/1. Catalyzes the attachment of serine to tRNA(Ser). Is also able to aminoacylate tRNA(Sec) with serine, to form the misacylated tRNA L-seryl-tRNA(Sec), which will be further converted into selenocysteinyl-tRNA(Sec). The chain is Serine--tRNA ligase from Sulfolobus acidocaldarius (strain ATCC 33909 / DSM 639 / JCM 8929 / NBRC 15157 / NCIMB 11770).